The chain runs to 130 residues: Fluoride-specific ion channel FluC (130 aa).

4 consecutive transmembrane segments (helical) span residues 4-24 (MINV…RYFI), 35-55 (GFPI…GLLT), 68-88 (LNLF…TFSL), and 99-119 (AVFG…GVVL). The Na(+) site is built by glycine 78 and threonine 81.

Belongs to the fluoride channel Fluc/FEX (TC 1.A.43) family.

The protein resides in the cell membrane. The catalysed reaction is fluoride(in) = fluoride(out). With respect to regulation, na(+) is not transported, but it plays an essential structural role and its presence is essential for fluoride channel function. In terms of biological role, fluoride-specific ion channel. Important for reducing fluoride concentration in the cell, thus reducing its toxicity. This is Fluoride-specific ion channel FluC from Ruminiclostridium cellulolyticum (strain ATCC 35319 / DSM 5812 / JCM 6584 / H10) (Clostridium cellulolyticum).